The following is a 162-amino-acid chain: Ribosome maturation factor RimM (162 aa).

Residues 91-162 form the PRC barrel domain; it reads DGSFYIDDLI…LIDVVIIEGM (72 aa).

Belongs to the RimM family. Binds ribosomal protein uS19.

The protein resides in the cytoplasm. An accessory protein needed during the final step in the assembly of 30S ribosomal subunit, possibly for assembly of the head region. Essential for efficient processing of 16S rRNA. May be needed both before and after RbfA during the maturation of 16S rRNA. It has affinity for free ribosomal 30S subunits but not for 70S ribosomes. This chain is Ribosome maturation factor RimM, found in Finegoldia magna (strain ATCC 29328 / DSM 20472 / WAL 2508) (Peptostreptococcus magnus).